A 927-amino-acid polypeptide reads, in one-letter code: MKSNSKVNINNNGDNHNQTKNNGTNGFLPNSLKFISTCIRTASSGVRSASASVAASLSSDSHELKDQVLWSSFDRLHTSESSFKNVLLLGYTNGFQVLDIDDSNDVTEFVSRRDDPVTFLQMQPLPAKCDGVEGFRSSHPILLAVADEAKGSGPIVTSRDGSVRNGYEDPLALSPTVVRFYSLRSHNYVHVLRFRSTVYMVRCSPRIVAVGLGSQIYCFDALTLENKFSVLSYPVPQLGNQGISGVNVGYGPMAVGARWLAYASNSPLSSSIGRLSPQNVTPPGVSPSTSPNNGNLVARYAMESSKHLAAGLLNLGDKGYKTISKYCQDLKHDGPGPSLSSSPGRKVGRVGSHSAESDVVGTVIVKDFESRAIIAQFRAHTSPISALCFDPSGTLLVTASIHGNNINVFRIMPTPTKNGPGAQSYDWSSSHVPLYKLHRGMTSAVIQDICFSSYSQWIAIVSSKSTCHIYVLSPFGGENVLEIRNSQFDGPTLAPTLSLPWWSSPSFMTTHFSYPPPASVTLSVVSRIKCNNFFHAASSVVGKPTFPSGCLAAVFHQSVPQESQSSSPALDYLLVYTPSGHVVQYKLIPSLGGDQAESNTRNGATSGLTSEEELRVKVEPVQCWDVCRRADWPEREENICGLTYGGRKNAELTVDTSDSEDQTKPLEKHHVYLANAEVLINSGRKPIWQNSEISFYPMYPPDSDGKNLNSHQGGGETEIGKVSANEVDIRRKDLLPVYDNFHSVYTSMRNRGFSGERDSDSSSSSDPGQVKEMHPFNGMVYPEDEERRGSAHFALTPNQNPHTGIVTFKQPVVSISSAVKDTDYIDDDAHVLPKNASLPAETKIENSSGISGDSNVSSNRSDMSMNAADEGEGPIDGSPNFEQFFEEVVSNETVTETEHKDAPSDGKLDDDEDDDMLGGVFAFSEEG.

2 disordered regions span residues 1–25 (MKSN…NGTN) and 333–353 (DGPG…VGSH). Residues 335–344 (PGPSLSSSPG) are compositionally biased toward low complexity. WD repeat units lie at residues 379–419 (AHTS…TKNG) and 441–482 (MTSA…NVLE). Disordered regions lie at residues 750–788 (NRGF…EERR) and 844–927 (IENS…SEEG). The span at 846 to 859 (NSSGISGDSNVSSN) shows a compositional bias: low complexity. Positions 896 to 907 (ETEHKDAPSDGK) are enriched in basic and acidic residues.

This sequence belongs to the WD repeat PROPPIN family. As to quaternary structure, component of the PI(3,5)P2 regulatory complex at least composed of ATG18, SAC/FIG4, FAB1 and VAC14. Expressed in roots, flowers and leaves.

The protein localises to the preautophagosomal structure membrane. It is found in the vacuole membrane. The PI(3,5)P2 regulatory complex regulates both the synthesis and turnover of phosphatidylinositol 3,5-bisphosphate (PtdIns(3,5)P2). Required for autophagy. This Arabidopsis thaliana (Mouse-ear cress) protein is Autophagy-related protein 18h (ATG18H).